A 294-amino-acid chain; its full sequence is Phosphoribosylaminoimidazole-succinocarboxamide synthase (294 aa).

Belongs to the SAICAR synthetase family.

The enzyme catalyses 5-amino-1-(5-phospho-D-ribosyl)imidazole-4-carboxylate + L-aspartate + ATP = (2S)-2-[5-amino-1-(5-phospho-beta-D-ribosyl)imidazole-4-carboxamido]succinate + ADP + phosphate + 2 H(+). It participates in purine metabolism; IMP biosynthesis via de novo pathway; 5-amino-1-(5-phospho-D-ribosyl)imidazole-4-carboxamide from 5-amino-1-(5-phospho-D-ribosyl)imidazole-4-carboxylate: step 1/2. This chain is Phosphoribosylaminoimidazole-succinocarboxamide synthase, found in Thermoplasma acidophilum (strain ATCC 25905 / DSM 1728 / JCM 9062 / NBRC 15155 / AMRC-C165).